The primary structure comprises 253 residues: E3 ubiquitin-protein ligase MARCHF3 (253 aa).

The RING-CH-type zinc-finger motif lies at 63-123 (SPFNDRPMCR…ELCHFRFAVE (61 aa)). Residues C71, C74, C87, C89, H97, C100, C113, and C116 each contribute to the Zn(2+) site. 2 helical membrane-spanning segments follow: residues 145–165 (LFGD…SGWL) and 182–202 (AVGL…WTLV). Phosphoserine is present on residues S237 and S243.

Interacts with MARCHF2 and STX6.

The protein localises to the cytoplasmic vesicle membrane. It is found in the early endosome membrane. It carries out the reaction S-ubiquitinyl-[E2 ubiquitin-conjugating enzyme]-L-cysteine + [acceptor protein]-L-lysine = [E2 ubiquitin-conjugating enzyme]-L-cysteine + N(6)-ubiquitinyl-[acceptor protein]-L-lysine.. Its pathway is protein modification; protein ubiquitination. Its function is as follows. E3 ubiquitin-protein ligase which may be involved in endosomal trafficking. E3 ubiquitin ligases accept ubiquitin from an E2 ubiquitin-conjugating enzyme in the form of a thioester and then directly transfer the ubiquitin to targeted substrates. The polypeptide is E3 ubiquitin-protein ligase MARCHF3 (Homo sapiens (Human)).